Consider the following 308-residue polypeptide: Very-long-chain enoyl-CoA reductase (308 aa).

Over 1 to 86 the chain is Cytoplasmic; the sequence is MKHYEVEILD…YFRDLGAQIS (86 aa). Residue Lys22 is modified to N6-acetyllysine. Ser58 bears the Phosphoserine mark. Lys60 is subject to N6-acetyllysine. The chain crosses the membrane as a helical span at residues 87–106; that stretch reads WVTVFLTEYAGPLFIYLLFY. Over 107 to 124 the chain is Lumenal; the sequence is FRVPFIYGHKYDFTSSRH. The helical transmembrane segment at 125-147 threads the bilayer; it reads TVVHLACICHSFHYIKRLLETLF. Topologically, residues 148–158 are cytoplasmic; the sequence is VHRFSHGTMPL. The chain crosses the membrane as a helical span at residues 159–180; the sequence is RNIFKNCTYYWGFAAWMAYYIN. The Lumenal segment spans residues 181–189; the sequence is HPLYTPPTY. A helical membrane pass occupies residues 190-216; sequence GAQQVKLALAIFVICQLGNFSIHMALR. Residues 217–245 lie on the Cytoplasmic side of the membrane; it reads DLRPAGSKTRKIPYPTKNPFTWLFLLVSC. Residues 246–262 traverse the membrane as a helical segment; that stretch reads PNYTYEVGSWIGFAIMT. Over 263-264 the chain is Lumenal; the sequence is QC. A helical transmembrane segment spans residues 265 to 292; sequence LPVALFSLVGFTQMTIWAKGKHRSYLKE. Topologically, residues 293–308 are cytoplasmic; sequence FRDYPPLRMPIIPFLL.

The protein belongs to the steroid 5-alpha reductase family. In terms of assembly, interacts with ELOVL1 and LASS2. Interacts with HACD1 and HACD2 (via the third lumenal loop), but not with HACD3 and HACD4. Interacts with ELOVL1, ELOVL2, ELOVL3, ELOVL5 and ELOVL7 in the presence of acyl-CoA; interaction with HACD1/2 and that with ELOVLs are mutually exclusive. Glycosylated. In terms of tissue distribution, expressed in most tissues tested. Highly expressed in skeletal muscle.

It is found in the endoplasmic reticulum membrane. It carries out the reaction a very-long-chain 2,3-saturated fatty acyl-CoA + NADP(+) = a very-long-chain (2E)-enoyl-CoA + NADPH + H(+). The enzyme catalyses octadecanoyl-CoA + NADP(+) = (2E)-octadecenoyl-CoA + NADPH + H(+). The catalysed reaction is (2E,7Z,10Z,13Z,16Z)-docosapentaenoyl-CoA + NADPH + H(+) = (7Z,10Z,13Z,16Z)-docosatetraenoyl-CoA + NADP(+). It catalyses the reaction (2E,7Z,10Z,13Z,16Z,19Z)-docosahexaenoyl-CoA + NADPH + H(+) = (7Z,10Z,13Z,16Z,19Z)-docosapentaenoyl-CoA + NADP(+). It carries out the reaction (2E,8Z,11Z,14Z)-eicosatetraenoyl-CoA + NADPH + H(+) = (8Z,11Z,14Z)-eicosatrienoyl-CoA + NADP(+). The enzyme catalyses (2E)-hexadecenoyl-CoA + NADPH + H(+) = hexadecanoyl-CoA + NADP(+). It participates in lipid metabolism; fatty acid biosynthesis. Its pathway is lipid metabolism; sphingolipid metabolism. Functionally, involved in both the production of very long-chain fatty acids for sphingolipid synthesis and the degradation of the sphingosine moiety in sphingolipids through the sphingosine 1-phosphate metabolic pathway. Catalyzes the last of the four reactions of the long-chain fatty acids elongation cycle. This endoplasmic reticulum-bound enzymatic process, allows the addition of 2 carbons to the chain of long- and very long-chain fatty acids/VLCFAs per cycle. This enzyme reduces the trans-2,3-enoyl-CoA fatty acid intermediate to an acyl-CoA that can be further elongated by entering a new cycle of elongation. Thereby, it participates in the production of VLCFAs of different chain lengths that are involved in multiple biological processes as precursors of membrane lipids and lipid mediators. Catalyzes the saturation step of the sphingosine 1-phosphate metabolic pathway, the conversion of trans-2-hexadecenoyl-CoA to palmitoyl-CoA. The polypeptide is Very-long-chain enoyl-CoA reductase (TECR) (Homo sapiens (Human)).